Consider the following 337-residue polypeptide: Vegetative-specific protein H5 (337 aa).

The Involved in the stabilization of the negatively charged intermediate by the formation of the oxyanion hole motif lies at 88-90; that stretch reads HGG. Active-site residues include Ser161, Asp261, and His291.

It belongs to the 'GDXG' lipolytic enzyme family.

In Dictyostelium discoideum (Social amoeba), this protein is Vegetative-specific protein H5 (cinB).